A 246-amino-acid polypeptide reads, in one-letter code: tRNA pseudouridine synthase A (246 aa).

D52 (nucleophile) is an active-site residue. Residue Y111 participates in substrate binding.

This sequence belongs to the tRNA pseudouridine synthase TruA family. Homodimer.

It catalyses the reaction uridine(38/39/40) in tRNA = pseudouridine(38/39/40) in tRNA. Functionally, formation of pseudouridine at positions 38, 39 and 40 in the anticodon stem and loop of transfer RNAs. This chain is tRNA pseudouridine synthase A, found in Parvibaculum lavamentivorans (strain DS-1 / DSM 13023 / NCIMB 13966).